The primary structure comprises 552 residues: ATP synthase subunit alpha (552 aa).

173-180 (GDRQTGKS) is a binding site for ATP. Positions 509-552 (KPQFSGGSKGSNVPKDVDAGATDADDISQEKITTRKGGATAARG) are disordered.

This sequence belongs to the ATPase alpha/beta chains family. F-type ATPases have 2 components, CF(1) - the catalytic core - and CF(0) - the membrane proton channel. CF(1) has five subunits: alpha(3), beta(3), gamma(1), delta(1), epsilon(1). CF(0) has three main subunits: a(1), b(2) and c(9-12). The alpha and beta chains form an alternating ring which encloses part of the gamma chain. CF(1) is attached to CF(0) by a central stalk formed by the gamma and epsilon chains, while a peripheral stalk is formed by the delta and b chains.

Its subcellular location is the cell membrane. It catalyses the reaction ATP + H2O + 4 H(+)(in) = ADP + phosphate + 5 H(+)(out). Functionally, produces ATP from ADP in the presence of a proton gradient across the membrane. The alpha chain is a regulatory subunit. In Kineococcus radiotolerans (strain ATCC BAA-149 / DSM 14245 / SRS30216), this protein is ATP synthase subunit alpha.